A 521-amino-acid polypeptide reads, in one-letter code: Protein NRT1/ PTR FAMILY 5.5 (521 aa).

12 helical membrane-spanning segments follow: residues Val-3–Thr-23, Ala-35–Val-55, Phe-62–Ser-82, Phe-96–Val-116, Leu-134–Ala-154, Phe-165–Ser-185, Val-279–Phe-299, Phe-310–Ala-327, Pro-356–Val-376, Val-394–Ile-414, Val-440–Val-460, and Tyr-478–Tyr-498.

This sequence belongs to the major facilitator superfamily. Proton-dependent oligopeptide transporter (POT/PTR) (TC 2.A.17) family. In terms of tissue distribution, expressed in roots.

The protein localises to the membrane. In Arabidopsis thaliana (Mouse-ear cress), this protein is Protein NRT1/ PTR FAMILY 5.5 (NPF5.5).